A 147-amino-acid polypeptide reads, in one-letter code: Hemoglobin subunit epsilon (147 aa).

A Globin domain is found at 3–147; that stretch reads HFTAEEKAAV…VAIALAHKYH (145 aa). Phosphoserine is present on residues Ser14 and Ser51. Heme b contacts are provided by His64 and His93.

It belongs to the globin family. As to quaternary structure, heterotetramer of two alpha chains and two epsilon chains in early embryonic hemoglobin Gower-2; two zeta chains and two epsilon chains in early embryonic hemoglobin Gower-1. Red blood cells.

Functionally, the epsilon chain is a beta-type chain of early mammalian embryonic hemoglobin. The sequence is that of Hemoglobin subunit epsilon (HBE1) from Symphalangus syndactylus (Siamang).